The chain runs to 184 residues: Ribosome maturation factor RimM (184 aa).

The 73-residue stretch at 93–165 folds into the PRC barrel domain; sequence DEGWYEHELV…YILITPPSGL (73 aa).

This sequence belongs to the RimM family. In terms of assembly, binds ribosomal protein uS19.

It localises to the cytoplasm. An accessory protein needed during the final step in the assembly of 30S ribosomal subunit, possibly for assembly of the head region. Essential for efficient processing of 16S rRNA. May be needed both before and after RbfA during the maturation of 16S rRNA. It has affinity for free ribosomal 30S subunits but not for 70S ribosomes. The polypeptide is Ribosome maturation factor RimM (Paenarthrobacter aurescens (strain TC1)).